A 508-amino-acid chain; its full sequence is Photosystem II CP47 reaction center protein (508 aa).

6 consecutive transmembrane segments (helical) span residues 21–36 (SVHI…WAGS), 101–115 (IVFS…IWHW), 140–156 (GIHL…FGAF), 203–218 (IAAG…FHLS), 237–252 (VLSS…AFVV), and 457–472 (SFAL…HGSR).

Belongs to the PsbB/PsbC family. PsbB subfamily. PSII is composed of 1 copy each of membrane proteins PsbA, PsbB, PsbC, PsbD, PsbE, PsbF, PsbH, PsbI, PsbJ, PsbK, PsbL, PsbM, PsbT, PsbX, PsbY, PsbZ, Psb30/Ycf12, at least 3 peripheral proteins of the oxygen-evolving complex and a large number of cofactors. It forms dimeric complexes. Requires Binds multiple chlorophylls. PSII binds additional chlorophylls, carotenoids and specific lipids. as cofactor.

The protein resides in the plastid. It is found in the chloroplast thylakoid membrane. Functionally, one of the components of the core complex of photosystem II (PSII). It binds chlorophyll and helps catalyze the primary light-induced photochemical processes of PSII. PSII is a light-driven water:plastoquinone oxidoreductase, using light energy to abstract electrons from H(2)O, generating O(2) and a proton gradient subsequently used for ATP formation. This is Photosystem II CP47 reaction center protein from Helianthus annuus (Common sunflower).